Reading from the N-terminus, the 173-residue chain is Small ribosomal subunit protein uS5 (173 aa).

One can recognise an S5 DRBM domain in the interval 17-80 (WQERVIQIRR…ADGKKQLIEV (64 aa)).

This sequence belongs to the universal ribosomal protein uS5 family. As to quaternary structure, part of the 30S ribosomal subunit. Contacts proteins S4 and S8.

Functionally, with S4 and S12 plays an important role in translational accuracy. Its function is as follows. Located at the back of the 30S subunit body where it stabilizes the conformation of the head with respect to the body. This chain is Small ribosomal subunit protein uS5, found in Synechocystis sp. (strain ATCC 27184 / PCC 6803 / Kazusa).